We begin with the raw amino-acid sequence, 464 residues long: Arginine biosynthesis bifunctional protein ArgJ, mitochondrial (464 aa).

A mitochondrion-targeting transit peptide spans 1 to 22 (MAASFKALPQQLTLTRSFARCY). Substrate contacts are provided by threonine 193, lysine 222, threonine 233, glutamate 320, asparagine 459, and threonine 464. Threonine 233 serves as the catalytic Nucleophile.

Belongs to the ArgJ family. Heterodimer of an alpha and a beta chain. The alpha and beta chains are autoproteolytically processed from a single precursor protein within the mitochondrion.

Its subcellular location is the mitochondrion matrix. The enzyme catalyses N(2)-acetyl-L-ornithine + L-glutamate = N-acetyl-L-glutamate + L-ornithine. It catalyses the reaction L-glutamate + acetyl-CoA = N-acetyl-L-glutamate + CoA + H(+). It functions in the pathway amino-acid biosynthesis; L-arginine biosynthesis; L-ornithine and N-acetyl-L-glutamate from L-glutamate and N(2)-acetyl-L-ornithine (cyclic): step 1/1. It participates in amino-acid biosynthesis; L-arginine biosynthesis; N(2)-acetyl-L-ornithine from L-glutamate: step 1/4. Its function is as follows. Catalyzes two activities which are involved in the cyclic version of arginine biosynthesis: the synthesis of acetylglutamate from glutamate and acetyl-CoA, and of ornithine by transacetylation between acetylornithine and glutamate. In Verticillium alfalfae (strain VaMs.102 / ATCC MYA-4576 / FGSC 10136) (Verticillium wilt of alfalfa), this protein is Arginine biosynthesis bifunctional protein ArgJ, mitochondrial.